Consider the following 368-residue polypeptide: 3-dehydroquinate synthase (368 aa).

NAD(+)-binding positions include 69–74 (DGEAYK), 103–107 (GVIGD), 127–128 (TT), Lys-140, and Lys-149. Residues Glu-182, His-245, and His-262 each coordinate Zn(2+).

It belongs to the sugar phosphate cyclases superfamily. Dehydroquinate synthase family. Requires Co(2+) as cofactor. Zn(2+) serves as cofactor. The cofactor is NAD(+).

Its subcellular location is the cytoplasm. It catalyses the reaction 7-phospho-2-dehydro-3-deoxy-D-arabino-heptonate = 3-dehydroquinate + phosphate. It functions in the pathway metabolic intermediate biosynthesis; chorismate biosynthesis; chorismate from D-erythrose 4-phosphate and phosphoenolpyruvate: step 2/7. Catalyzes the conversion of 3-deoxy-D-arabino-heptulosonate 7-phosphate (DAHP) to dehydroquinate (DHQ). This Pseudomonas aeruginosa (strain UCBPP-PA14) protein is 3-dehydroquinate synthase.